The sequence spans 401 residues: Argininosuccinate synthase (401 aa).

Residue 9 to 17 coordinates ATP; that stretch reads AYSGGLDTS. Tyr86 is a binding site for L-citrulline. Gly116 contacts ATP. Thr118, Asn122, and Asp123 together coordinate L-aspartate. Asn122 lines the L-citrulline pocket. L-citrulline contacts are provided by Arg126, Ser174, Ser183, Glu259, and Tyr271.

It belongs to the argininosuccinate synthase family. Type 1 subfamily. Homotetramer.

Its subcellular location is the cytoplasm. It carries out the reaction L-citrulline + L-aspartate + ATP = 2-(N(omega)-L-arginino)succinate + AMP + diphosphate + H(+). It participates in amino-acid biosynthesis; L-arginine biosynthesis; L-arginine from L-ornithine and carbamoyl phosphate: step 2/3. The sequence is that of Argininosuccinate synthase from Bacillus cereus (strain Q1).